An 89-amino-acid chain; its full sequence is Putative sodium channel toxin Ts30 (89 aa).

A signal peptide spans 1–17; the sequence is MFKLAIILALLFFGARA. Positions 21–85 constitute an LCN-type CS-alpha/beta domain; sequence RDGYPILSDG…FGDSGTPECH (65 aa). 4 cysteine pairs are disulfide-bonded: cysteine 31/cysteine 84, cysteine 35/cysteine 59, cysteine 44/cysteine 64, and cysteine 48/cysteine 66.

Expressed by the venom gland.

The protein resides in the secreted. This chain is Putative sodium channel toxin Ts30, found in Tityus serrulatus (Brazilian scorpion).